Reading from the N-terminus, the 277-residue chain is Phosphatidylglycerol--prolipoprotein diacylglyceryl transferase (277 aa).

The next 4 membrane-spanning stretches (helical) occupy residues Ile18–Ala38, Ile51–Tyr71, Ile89–Ile109, and Ile116–Gly136. Position 137 (Arg137) interacts with a 1,2-diacyl-sn-glycero-3-phospho-(1'-sn-glycerol). Transmembrane regions (helical) follow at residues Gln177 to Ile197, Gly205 to Met225, and Phe235 to Tyr255.

It belongs to the Lgt family.

The protein localises to the cell membrane. The enzyme catalyses L-cysteinyl-[prolipoprotein] + a 1,2-diacyl-sn-glycero-3-phospho-(1'-sn-glycerol) = an S-1,2-diacyl-sn-glyceryl-L-cysteinyl-[prolipoprotein] + sn-glycerol 1-phosphate + H(+). It participates in protein modification; lipoprotein biosynthesis (diacylglyceryl transfer). Its function is as follows. Catalyzes the transfer of the diacylglyceryl group from phosphatidylglycerol to the sulfhydryl group of the N-terminal cysteine of a prolipoprotein, the first step in the formation of mature lipoproteins. The chain is Phosphatidylglycerol--prolipoprotein diacylglyceryl transferase from Listeria monocytogenes serotype 4a (strain HCC23).